A 60-amino-acid chain; its full sequence is Large ribosomal subunit protein bL32 (60 aa).

Residues 1 to 60 (MAVQQNKKSPSKRGMHRSHDFLVNPSTAIEPTTGETHLRHHISPNGFYRGRKVLKTKADE) form a disordered region. Residues 24–35 (NPSTAIEPTTGE) show a composition bias toward polar residues. Basic residues predominate over residues 49–60 (RGRKVLKTKADE).

Belongs to the bacterial ribosomal protein bL32 family.

This is Large ribosomal subunit protein bL32 from Bordetella petrii (strain ATCC BAA-461 / DSM 12804 / CCUG 43448).